A 348-amino-acid polypeptide reads, in one-letter code: UDP-rhamnose/UDP-galactose transporter 2 (348 aa).

10 helical membrane passes run 12 to 32 (AVSD…IIMA), 44 to 64 (FSFA…VGMV), 81 to 101 (LLWF…SLML), 104 to 124 (VGFY…MEWV), 133 to 153 (EVKA…VTDV), 160 to 180 (FICA…IGSL), 196 to 216 (APIQ…FLSG), 230 to 250 (LCIL…YLCI), 257 to 277 (SFQV…WLIF), and 286 to 306 (IAGM…VELE).

The protein belongs to the TPT transporter family. TPT (TC 2.A.7.9) subfamily.

It localises to the golgi apparatus membrane. Nucleotide-sugar transporter that transports UDP-rhamnose or UDP-galactose and UMP in a strict counter-exchange mode. This Arabidopsis thaliana (Mouse-ear cress) protein is UDP-rhamnose/UDP-galactose transporter 2.